A 48-amino-acid chain; its full sequence is MARFPEAEARTLNLQICRKCNARNALRATRCRKCGYEGLRPKKKELKK.

Belongs to the eukaryotic ribosomal protein eL40 family.

The polypeptide is Large ribosomal subunit protein eL40 (Methanocella arvoryzae (strain DSM 22066 / NBRC 105507 / MRE50)).